Here is a 106-residue protein sequence, read N- to C-terminus: uncharacterized protein (106 aa).

It belongs to the HesB/IscA family.

This is an uncharacterized protein from Bradyrhizobium diazoefficiens (strain JCM 10833 / BCRC 13528 / IAM 13628 / NBRC 14792 / USDA 110).